The following is a 930-amino-acid chain: Dual serine/threonine and tyrosine protein kinase (930 aa).

The segment covering Met1–Ser14 has biased composition (low complexity). The disordered stretch occupies residues Met1–Gly22. Coiled-coil stretches lie at residues Glu190 to Ala216 and Arg396 to Leu432. The Protein kinase domain maps to Pro653–Leu907. ATP-binding positions include Leu659–Val667 and Lys682. The active-site Proton acceptor is Asp778.

This sequence belongs to the protein kinase superfamily. Ser/Thr protein kinase family.

It is found in the cytoplasm. The protein resides in the cell membrane. The protein localises to the apical cell membrane. Its subcellular location is the basolateral cell membrane. It localises to the cell junction. The enzyme catalyses L-seryl-[protein] + ATP = O-phospho-L-seryl-[protein] + ADP + H(+). It catalyses the reaction L-threonyl-[protein] + ATP = O-phospho-L-threonyl-[protein] + ADP + H(+). It carries out the reaction L-tyrosyl-[protein] + ATP = O-phospho-L-tyrosyl-[protein] + ADP + H(+). In terms of biological role, acts as a positive regulator of ERK phosphorylation downstream of fibroblast growth factor-receptor activation. Involved in the regulation of both caspase-dependent apoptosis and caspase-independent cell death. In the skin, it plays a predominant role in suppressing caspase-dependent apoptosis in response to UV stress in a range of dermal cell types. This is Dual serine/threonine and tyrosine protein kinase (DSTYK) from Pan troglodytes (Chimpanzee).